Reading from the N-terminus, the 133-residue chain is Cytochrome c-type biogenesis protein CcmE (133 aa).

Topologically, residues 1 to 7 (MKRKHKR) are cytoplasmic. Residues 8 to 28 (LLFIIVTFIIFGSSVVIVLNK) traverse the membrane as a helical; Signal-anchor for type II membrane protein segment. The Periplasmic segment spans residues 29-133 (LRSNISFFFT…NYKPGKYRAK (105 aa)). Heme is bound by residues H121 and Y125.

The protein belongs to the CcmE/CycJ family.

The protein resides in the cell inner membrane. In terms of biological role, heme chaperone required for the biogenesis of c-type cytochromes. Transiently binds heme delivered by CcmC and transfers the heme to apo-cytochromes in a process facilitated by CcmF and CcmH. In Ehrlichia canis (strain Jake), this protein is Cytochrome c-type biogenesis protein CcmE.